A 473-amino-acid chain; its full sequence is Photosystem II CP43 reaction center protein (473 aa).

Positions 1–14 (MKTLYSLRRFYHVE) are excised as a propeptide. N-acetylthreonine is present on T15. The residue at position 15 (T15) is a Phosphothreonine. Transmembrane regions (helical) follow at residues 69 to 93 (LFEV…PHLA), 134 to 155 (LIGP…KDKN), 178 to 200 (KACY…RIIT), 255 to 275 (KPWA…LSYS), and 291 to 312 (WFNN…ASQA). [CaMn4O5] cluster is bound at residue E367. A helical transmembrane segment spans residues 447–471 (RARAAAAGFEKGIERETEPVLFMKP).

It belongs to the PsbB/PsbC family. PsbC subfamily. In terms of assembly, PSII is composed of 1 copy each of membrane proteins PsbA, PsbB, PsbC, PsbD, PsbE, PsbF, PsbH, PsbI, PsbJ, PsbK, PsbL, PsbM, PsbT, PsbX, PsbY, PsbZ, Psb30/Ycf12, at least 3 peripheral proteins of the oxygen-evolving complex and a large number of cofactors. It forms dimeric complexes. Binds multiple chlorophylls and provides some of the ligands for the Ca-4Mn-5O cluster of the oxygen-evolving complex. It may also provide a ligand for a Cl- that is required for oxygen evolution. PSII binds additional chlorophylls, carotenoids and specific lipids. serves as cofactor.

The protein localises to the plastid. It localises to the chloroplast thylakoid membrane. In terms of biological role, one of the components of the core complex of photosystem II (PSII). It binds chlorophyll and helps catalyze the primary light-induced photochemical processes of PSII. PSII is a light-driven water:plastoquinone oxidoreductase, using light energy to abstract electrons from H(2)O, generating O(2) and a proton gradient subsequently used for ATP formation. The sequence is that of Photosystem II CP43 reaction center protein from Mesostigma viride (Green alga).